We begin with the raw amino-acid sequence, 418 residues long: Thyroxine-binding globulin (418 aa).

Residues Met-1 to Cys-20 form the signal peptide. Asn-24, Asn-39, Asn-102, Asn-168, Asn-227, and Asn-256 each carry an N-linked (GlcNAc...) asparagine glycan. Residues Asn-296 and Lys-401 each contribute to the thyroxine site.

This sequence belongs to the serpin family.

It is found in the secreted. Its function is as follows. Major thyroid hormone transport protein in serum. The sequence is that of Thyroxine-binding globulin (Serpina7) from Mus musculus (Mouse).